A 512-amino-acid polypeptide reads, in one-letter code: Tabersonine 16-hydroxylase 2 (512 aa).

Residue Met-1 is a topological domain, lumenal. The helical transmembrane segment at 2–22 threads the bilayer; sequence ELYYFSTFAFLLFCFILAKTL. The Cytoplasmic portion of the chain corresponds to 23–512; it reads KKSGQSNLKL…YSASSLKGKY (490 aa). Cys-445 is a binding site for heme.

The protein belongs to the cytochrome P450 family. The cofactor is heme. In terms of tissue distribution, expressed at low levels in roots, fruits, stems, flower buds and flowers, but highly expressed in young leaves. Detected in adaxial and abaxial epidermis cells.

It is found in the endoplasmic reticulum membrane. The enzyme catalyses (-)-tabersonine + reduced [NADPH--hemoprotein reductase] + O2 = 16-hydroxytabersonine + oxidized [NADPH--hemoprotein reductase] + H2O + H(+). Its function is as follows. Involved in the foliar biosynthesis of vindoline, a precursor of vinblastine and vincristine. Hydroxylates specifically tabersonine, 2,3-dihydrotabersonine and 2,3-dihydro-3-hydroxytabersonine, but has no activity with naringenin, tryptamine, secologanin, strictosidine, ajmalicine, vindoline and catharanthine. This Catharanthus roseus (Madagascar periwinkle) protein is Tabersonine 16-hydroxylase 2.